The following is a 154-amino-acid chain: Transcriptional repressor NrdR (154 aa).

The segment at 3-34 (CPFCSHNDSKVIDSRPTDEGQAIRRRRECISC) is a zinc-finger region. An ATP-cone domain is found at 49 to 139 (LIVVKKNGNR…VYREFKDINT (91 aa)).

This sequence belongs to the NrdR family. It depends on Zn(2+) as a cofactor.

Negatively regulates transcription of bacterial ribonucleotide reductase nrd genes and operons by binding to NrdR-boxes. This Alkaliphilus oremlandii (strain OhILAs) (Clostridium oremlandii (strain OhILAs)) protein is Transcriptional repressor NrdR.